A 354-amino-acid polypeptide reads, in one-letter code: Tetraacyldisaccharide 4'-kinase (354 aa).

Position 53–60 (53–60 (AWGGTGKT)) interacts with ATP.

It belongs to the LpxK family.

It catalyses the reaction a lipid A disaccharide + ATP = a lipid IVA + ADP + H(+). It functions in the pathway glycolipid biosynthesis; lipid IV(A) biosynthesis; lipid IV(A) from (3R)-3-hydroxytetradecanoyl-[acyl-carrier-protein] and UDP-N-acetyl-alpha-D-glucosamine: step 6/6. Transfers the gamma-phosphate of ATP to the 4'-position of a tetraacyldisaccharide 1-phosphate intermediate (termed DS-1-P) to form tetraacyldisaccharide 1,4'-bis-phosphate (lipid IVA). The sequence is that of Tetraacyldisaccharide 4'-kinase from Nitratidesulfovibrio vulgaris (strain ATCC 29579 / DSM 644 / CCUG 34227 / NCIMB 8303 / VKM B-1760 / Hildenborough) (Desulfovibrio vulgaris).